A 339-amino-acid polypeptide reads, in one-letter code: MTIIVTGAAGFIGANIVQALNVRGEKNIIAVDDLRPADKYRNLADLDIIDYLDKDEFLEAFRSGRFGKVKAVFHEGACSDTMETDGIFMMANNYRYTMDLLDICTAQKVQLLYASSAATYGGSDVFVESREHEKPLNIYGYSKFLFDQVMRKRFAEKTNTAQVVGFRYFNVYGPRESHKGRMASVAFHQYYQYKANGHVKLFGEYGGYGAGEQSRDFVSVEDVVKVNLFFLDHPEISGIFNLGSGRAQPFNDVAHAVANAMRKLDKAAPASLQELVKEKAIEYIPFPDALKGRYQCFTQADLTKLRAAGYAEPFLTVEQGVGRYIEWLEANSSFLANPL.

NADP(+) is bound by residues 11-12, 32-33, K39, K54, 75-79, and N92; these read FI, DD, and EGACS. Y139 functions as the Proton acceptor in the catalytic mechanism. An NADP(+)-binding site is contributed by K143. N170 lines the substrate pocket. NADP(+) contacts are provided by V171 and K179. Catalysis depends on K179, which acts as the Proton acceptor. Residues R181, H188, 202-205, R215, and Y294 contribute to the substrate site; that span reads FGEY.

This sequence belongs to the NAD(P)-dependent epimerase/dehydratase family. HldD subfamily. As to quaternary structure, homopentamer. It depends on NADP(+) as a cofactor.

It carries out the reaction ADP-D-glycero-beta-D-manno-heptose = ADP-L-glycero-beta-D-manno-heptose. The protein operates within nucleotide-sugar biosynthesis; ADP-L-glycero-beta-D-manno-heptose biosynthesis; ADP-L-glycero-beta-D-manno-heptose from D-glycero-beta-D-manno-heptose 7-phosphate: step 4/4. In terms of biological role, catalyzes the interconversion between ADP-D-glycero-beta-D-manno-heptose and ADP-L-glycero-beta-D-manno-heptose via an epimerization at carbon 6 of the heptose. This is ADP-L-glycero-D-manno-heptose-6-epimerase from Polynucleobacter necessarius subsp. necessarius (strain STIR1).